The sequence spans 317 residues: MSQDRQLQLVTSVMISAGFEVSEKFTLRPRSFDLIARNNGTLVVIKVVTHIDSVSEEAAFDLDVIAAHLGGVPLIVGERAREAELERGAVYVRYGIYAISVSTMYDYFVEKIPPLVYASPGGLYVNINGDALRELRERRSMSLGDLGQVLGVSRRTISKYESGMGTTLEVAIRIEEYFNTGVVESIDIAKREPAKSDSPTSKKPQGPGVPFGFLEELGMQLHTLRGAPFQALLTFDRHTILTGYGPAQKVVKRAALISNLSRIAKKHAMCVITDYHHEKKIGRTLVIGEERLHSIEDGFELLDLLGDIGADPSPRDS.

The HTH cro/C1-type domain occupies 132 to 185 (LRELRERRSMSLGDLGQVLGVSRRTISKYESGMGTTLEVAIRIEEYFNTGVVES). A DNA-binding region (H-T-H motif) is located at residues 143 to 162 (LGDLGQVLGVSRRTISKYES).

The chain is Putative HTH-type transcriptional regulatory protein Mboo_0195 from Methanoregula boonei (strain DSM 21154 / JCM 14090 / 6A8).